Here is a 256-residue protein sequence, read N- to C-terminus: Na(+)-translocating NADH-quinone reductase subunit E (256 aa).

Helical transmembrane passes span 1–21 (MWLGAYTWLNVFGILLQAAFI), 50–70 (MSVALVLTVTGSINWFVHAFI), 83–103 (LASVNLGFLELIIFIVVIAAF), 123–143 (GIFLPLIAVNCAILGGVLFGI), 149–169 (FIPMMIFSLGAGCGWWLAIVI), and 189–209 (MGISFITTGLIAMAFMSLTGI). The segment covering 229-249 (ENTTNPLKESSSKHQPSISKA) has biased composition (polar residues). The interval 229-256 (ENTTNPLKESSSKHQPSISKARTQRRSL) is disordered.

This sequence belongs to the NqrDE/RnfAE family. In terms of assembly, composed of six subunits; NqrA, NqrB, NqrC, NqrD, NqrE and NqrF.

Its subcellular location is the cell inner membrane. The catalysed reaction is a ubiquinone + n Na(+)(in) + NADH + H(+) = a ubiquinol + n Na(+)(out) + NAD(+). NQR complex catalyzes the reduction of ubiquinone-1 to ubiquinol by two successive reactions, coupled with the transport of Na(+) ions from the cytoplasm to the periplasm. NqrA to NqrE are probably involved in the second step, the conversion of ubisemiquinone to ubiquinol. The sequence is that of Na(+)-translocating NADH-quinone reductase subunit E from Chlamydia pneumoniae (Chlamydophila pneumoniae).